The sequence spans 191 residues: Crossover junction endodeoxyribonuclease RuvC (191 aa).

Residues aspartate 7, glutamate 67, and aspartate 141 contribute to the active site. Mg(2+)-binding residues include aspartate 7, glutamate 67, and aspartate 141.

The protein belongs to the RuvC family. As to quaternary structure, homodimer which binds Holliday junction (HJ) DNA. The HJ becomes 2-fold symmetrical on binding to RuvC with unstacked arms; it has a different conformation from HJ DNA in complex with RuvA. In the full resolvosome a probable DNA-RuvA(4)-RuvB(12)-RuvC(2) complex forms which resolves the HJ. Mg(2+) serves as cofactor.

The protein localises to the cytoplasm. It carries out the reaction Endonucleolytic cleavage at a junction such as a reciprocal single-stranded crossover between two homologous DNA duplexes (Holliday junction).. Its function is as follows. The RuvA-RuvB-RuvC complex processes Holliday junction (HJ) DNA during genetic recombination and DNA repair. Endonuclease that resolves HJ intermediates. Cleaves cruciform DNA by making single-stranded nicks across the HJ at symmetrical positions within the homologous arms, yielding a 5'-phosphate and a 3'-hydroxyl group; requires a central core of homology in the junction. The consensus cleavage sequence is 5'-(A/T)TT(C/G)-3'. Cleavage occurs on the 3'-side of the TT dinucleotide at the point of strand exchange. HJ branch migration catalyzed by RuvA-RuvB allows RuvC to scan DNA until it finds its consensus sequence, where it cleaves and resolves the cruciform DNA. This is Crossover junction endodeoxyribonuclease RuvC from Myxococcus xanthus (strain DK1622).